Reading from the N-terminus, the 712-residue chain is Polyribonucleotide nucleotidyltransferase (712 aa).

Positions 493 and 499 each coordinate Mg(2+). A KH domain is found at 560–619 (PRLLTFKVDPEDIGKIIGPGGKMVRSITEATGAKVDISDDGTITVSSSVGGQAEAARAMI). In terms of domain architecture, S1 motif spans 629–697 (GQVYLGKVTR…HKGRVNLTRL (69 aa)).

This sequence belongs to the polyribonucleotide nucleotidyltransferase family. The cofactor is Mg(2+).

The protein localises to the cytoplasm. The catalysed reaction is RNA(n+1) + phosphate = RNA(n) + a ribonucleoside 5'-diphosphate. In terms of biological role, involved in mRNA degradation. Catalyzes the phosphorolysis of single-stranded polyribonucleotides processively in the 3'- to 5'-direction. This chain is Polyribonucleotide nucleotidyltransferase, found in Synechococcus sp. (strain JA-3-3Ab) (Cyanobacteria bacterium Yellowstone A-Prime).